We begin with the raw amino-acid sequence, 493 residues long: Ribose import ATP-binding protein RbsA (493 aa).

ABC transporter domains lie at 3–239 and 252–493; these read IKMK…VGRE and GRVV…TGGR. 35 to 42 serves as a coordination point for ATP; the sequence is GENGAGKS.

Belongs to the ABC transporter superfamily. Ribose importer (TC 3.A.1.2.1) family. In terms of assembly, the complex is composed of an ATP-binding protein (RbsA), two transmembrane proteins (RbsC) and a solute-binding protein (RbsB).

The protein localises to the cell membrane. The catalysed reaction is D-ribose(out) + ATP + H2O = D-ribose(in) + ADP + phosphate + H(+). Part of the ABC transporter complex RbsABC involved in ribose import. Responsible for energy coupling to the transport system. This chain is Ribose import ATP-binding protein RbsA, found in Bacillus licheniformis (strain ATCC 14580 / DSM 13 / JCM 2505 / CCUG 7422 / NBRC 12200 / NCIMB 9375 / NCTC 10341 / NRRL NRS-1264 / Gibson 46).